The primary structure comprises 212 residues: Pyridoxine/pyridoxamine 5'-phosphate oxidase (212 aa).

Residues 8–11 (RRTY) and K66 each bind substrate. FMN-binding positions include 61–66 (RIVLLK), 76–77 (FT), R82, K83, and Q105. Positions 123, 127, and 131 each coordinate substrate. Residues 140–141 (QS) and W184 contribute to the FMN site. Substrate is bound at residue 190 to 192 (RLH). R194 is a binding site for FMN.

This sequence belongs to the pyridoxamine 5'-phosphate oxidase family. Homodimer. FMN is required as a cofactor.

The catalysed reaction is pyridoxamine 5'-phosphate + O2 + H2O = pyridoxal 5'-phosphate + H2O2 + NH4(+). The enzyme catalyses pyridoxine 5'-phosphate + O2 = pyridoxal 5'-phosphate + H2O2. Its pathway is cofactor metabolism; pyridoxal 5'-phosphate salvage; pyridoxal 5'-phosphate from pyridoxamine 5'-phosphate: step 1/1. It functions in the pathway cofactor metabolism; pyridoxal 5'-phosphate salvage; pyridoxal 5'-phosphate from pyridoxine 5'-phosphate: step 1/1. Its function is as follows. Catalyzes the oxidation of either pyridoxine 5'-phosphate (PNP) or pyridoxamine 5'-phosphate (PMP) into pyridoxal 5'-phosphate (PLP). This is Pyridoxine/pyridoxamine 5'-phosphate oxidase from Cupriavidus taiwanensis (strain DSM 17343 / BCRC 17206 / CCUG 44338 / CIP 107171 / LMG 19424 / R1) (Ralstonia taiwanensis (strain LMG 19424)).